The sequence spans 149 residues: Large ribosomal subunit protein bL9 (149 aa).

The protein belongs to the bacterial ribosomal protein bL9 family.

Binds to the 23S rRNA. The polypeptide is Large ribosomal subunit protein bL9 (Desulforamulus reducens (strain ATCC BAA-1160 / DSM 100696 / MI-1) (Desulfotomaculum reducens)).